The sequence spans 2164 residues: Genome polyprotein (2164 aa).

A lipid anchor (N-myristoyl glycine; by host) is attached at Gly2. Residues 2 to 1477 (GAQVSRQNVG…DLGIANMTIG (1476 aa)) are Cytoplasmic-facing. The segment at 208–239 (NVSVGYNHTHPGEQGREVVPSRTSSDNKRPSD) is disordered. The tract at residues 572–588 (LTQNPVENYIDSVLNEV) is amphipathic alpha-helix. Active-site for protease 2A activity residues include His884 and Asp901. Cys918 and Cys920 together coordinate Zn(2+). Cys972 acts as the For protease 2A activity in catalysis. The Zn(2+) site is built by Cys978 and His980. Residues 1104 to 1173 (SDSWLKKFTE…TIRLAPASVQ (70 aa)) are membrane-binding. The tract at residues 1104–1237 (SDSWLKKFTE…SPGTGKSLAT (134 aa)) is oligomerization. Residues 1125-1129 (GQKIS) form an RNA-binding region. The region spanning 1197–1357 (EARRIKNLYI…KEYLLDGKLD (161 aa)) is the SF3 helicase domain. ATP is bound at residue 1227–1234 (GSPGTGKS). Positions 1365, 1376, and 1381 each coordinate Zn(2+). Residues 1365 to 1381 (CDVNIKIGNAKCCPFIC) form a C4-type; degenerate zinc finger. The RNA-binding stretch occupies residues 1408–1415 (EDRRRSSA). An oligomerization region spans residues 1419–1424 (MEAIFQ). The stretch at 1478-1493 (IIANVVSIVGVIYIIY) is an intramembrane region. At 1494–2164 (KLFCTLQGPY…VLEHEWYEKF (671 aa)) the chain is on the cytoplasmic side. Tyr1503 bears the O-(5'-phospho-RNA)-tyrosine mark. The Peptidase C3 domain occupies 1522–1700 (GPEEEFGRSL…FSAMLLKSYF (179 aa)). Residues His1561, Glu1592, and Cys1668 each act as for protease 3C activity in the active site. The RdRp catalytic domain maps to 1932–2045 (ECLMAFDYSN…SYNFKLDMAV (114 aa)). Mg(2+) contacts are provided by Asp1938 and Asp2031.

This sequence belongs to the picornaviruses polyprotein family. As to quaternary structure, interacts with capsid protein VP1 and capsid protein VP3 to form heterotrimeric protomers. In terms of assembly, interacts with capsid protein VP0, and capsid protein VP3 to form heterotrimeric protomers. Five protomers subsequently associate to form pentamers which serve as building blocks for the capsid. Interacts with capsid protein VP2, capsid protein VP3 and capsid protein VP4 following cleavage of capsid protein VP0. Interacts with capsid protein VP1 and capsid protein VP3 in the mature capsid. As to quaternary structure, interacts with capsid protein VP0 and capsid protein VP1 to form heterotrimeric protomers. Five protomers subsequently associate to form pentamers which serve as building blocks for the capsid. Interacts with capsid protein VP4 in the mature capsid. Interacts with protein 2C; this interaction may be important for virion morphogenesis. In terms of assembly, interacts with capsid protein VP1 and capsid protein VP3. Homodimer. As to quaternary structure, homohexamer; forms a hexameric ring structure with 6-fold symmetry characteristic of AAA+ ATPases. Interacts (via N-terminus) with host RTN3 (via reticulon domain); this interaction is important for viral replication. Interacts with capsid protein VP3; this interaction may be important for virion morphogenesis. In terms of assembly, interacts with protein 3CD. Homodimer. Interacts with host GBF1. Interacts (via GOLD domain) with host ACBD3 (via GOLD domain); this interaction allows the formation of a viral protein 3A/ACBD3 heterotetramer with a 2:2 stoichiometry, which will stimulate the recruitment of host PI4KB in order to synthesize PI4P at the viral RNA replication sites. As to quaternary structure, interacts with RNA-directed RNA polymerase. In terms of assembly, interacts with protein 3AB and with RNA-directed RNA polymerase. Interacts with Viral protein genome-linked and with protein 3CD. Mg(2+) serves as cofactor. In terms of processing, specific enzymatic cleavages in vivo by the viral proteases yield processing intermediates and the mature proteins. Myristoylation is required for the formation of pentamers during virus assembly. Further assembly of 12 pentamers and a molecule of genomic RNA generates the provirion. Post-translationally, during virion maturation, immature virions are rendered infectious following cleavage of VP0 into VP4 and VP2. This maturation seems to be an autocatalytic event triggered by the presence of RNA in the capsid and it is followed by a conformational change infectious virion. In terms of processing, myristoylation is required during RNA encapsidation and formation of the mature virus particle. VPg is uridylylated by the polymerase into VPg-pUpU. This acts as a nucleotide-peptide primer for the genomic RNA replication.

It localises to the virion. The protein resides in the host cytoplasm. Its subcellular location is the host cytoplasmic vesicle membrane. The protein localises to the host nucleus. It carries out the reaction a ribonucleoside 5'-triphosphate + H2O = a ribonucleoside 5'-diphosphate + phosphate + H(+). The enzyme catalyses Selective cleavage of Tyr-|-Gly bond in the picornavirus polyprotein.. The catalysed reaction is RNA(n) + a ribonucleoside 5'-triphosphate = RNA(n+1) + diphosphate. It catalyses the reaction Selective cleavage of Gln-|-Gly bond in the poliovirus polyprotein. In other picornavirus reactions Glu may be substituted for Gln, and Ser or Thr for Gly.. Replication or transcription is subject to high level of random mutations by the nucleotide analog ribavirin. Forms an icosahedral capsid of pseudo T=3 symmetry with capsid proteins VP2 and VP3. The capsid is 300 Angstroms in diameter, composed of 60 copies of each capsid protein and enclosing the viral positive strand RNA genome. Capsid protein VP1 mainly forms the vertices of the capsid. Capsid protein VP1 interacts with host cell receptor to provide virion attachment to target host cells. This attachment induces virion internalization. Tyrosine kinases are probably involved in the entry process. After binding to its receptor, the capsid undergoes conformational changes. Capsid protein VP1 N-terminus (that contains an amphipathic alpha-helix) and capsid protein VP4 are externalized. Together, they shape a pore in the host membrane through which viral genome is translocated to host cell cytoplasm. Functionally, forms an icosahedral capsid of pseudo T=3 symmetry with capsid proteins VP2 and VP3. The capsid is 300 Angstroms in diameter, composed of 60 copies of each capsid protein and enclosing the viral positive strand RNA genome. Its function is as follows. Lies on the inner surface of the capsid shell. After binding to the host receptor, the capsid undergoes conformational changes. Capsid protein VP4 is released, Capsid protein VP1 N-terminus is externalized, and together, they shape a pore in the host membrane through which the viral genome is translocated into the host cell cytoplasm. In terms of biological role, component of immature procapsids, which is cleaved into capsid proteins VP4 and VP2 after maturation. Allows the capsid to remain inactive before the maturation step. Cysteine protease that cleaves viral polyprotein and specific host proteins. It is responsible for the autocatalytic cleavage between the P1 and P2 regions, which is the first cleavage occurring in the polyprotein. Also cleaves the host translation initiation factor EIF4G1, in order to shut down the capped cellular mRNA translation. Inhibits the host nucleus-cytoplasm protein and RNA trafficking by cleaving host members of the nuclear pores. Counteracts stress granule formation probably by antagonizing its assembly or promoting its dissassembly. Functionally, plays an essential role in the virus replication cycle by acting as a viroporin. Creates a pore in the host endoplasmic reticulum and as a consequence releases Ca2+ in the cytoplasm of infected cell. In turn, high levels of cytoplasmic calcium may trigger membrane trafficking and transport of viral ER-associated proteins to viroplasms, sites of viral genome replication. Its function is as follows. Induces and associates with structural rearrangements of intracellular membranes. Displays RNA-binding, nucleotide binding and NTPase activities. May play a role in virion morphogenesis and viral RNA encapsidation by interacting with the capsid protein VP3. In terms of biological role, localizes the viral replication complex to the surface of membranous vesicles. Together with protein 3CD binds the Cis-Active RNA Element (CRE) which is involved in RNA synthesis initiation. Acts as a cofactor to stimulate the activity of 3D polymerase, maybe through a nucleid acid chaperone activity. Localizes the viral replication complex to the surface of membranous vesicles. It inhibits host cell endoplasmic reticulum-to-Golgi apparatus transport and causes the disassembly of the Golgi complex, possibly through GBF1 interaction. This would result in depletion of MHC, trail receptors and IFN receptors at the host cell surface. Plays an essential role in viral RNA replication by recruiting ACBD3 and PI4KB at the viral replication sites, thereby allowing the formation of the rearranged membranous structures where viral replication takes place. Functionally, acts as a primer for viral RNA replication and remains covalently bound to viral genomic RNA. VPg is uridylylated prior to priming replication into VPg-pUpU. The oriI viral genomic sequence may act as a template for this. The VPg-pUpU is then used as primer on the genomic RNA poly(A) by the RNA-dependent RNA polymerase to replicate the viral genome. During genome replication, the VPg-RNA linkage is removed by the host TDP2, thereby accelerating replication. During the late stage of the replication cycle, host TDP2 is excluded from sites of viral RNA synthesis and encapsidation, allowing for the generation of progeny virions. Its function is as follows. Involved in the viral replication complex and viral polypeptide maturation. It exhibits protease activity with a specificity and catalytic efficiency that is different from protease 3C. Protein 3CD lacks polymerase activity. Protein 3CD binds to the 5'UTR of the viral genome. In terms of biological role, replicates the viral genomic RNA on the surface of intracellular membranes. May form linear arrays of subunits that propagate along a strong head-to-tail interaction called interface-I. Covalently attaches UMP to a tyrosine of VPg, which is used to prime RNA synthesis. The positive stranded RNA genome is first replicated at virus induced membranous vesicles, creating a dsRNA genomic replication form. This dsRNA is then used as template to synthesize positive stranded RNA genomes. ss(+)RNA genomes are either translated, replicated or encapsidated. Major viral protease that mediates proteolytic processing of the polyprotein. Cleaves host EIF5B, contributing to host translation shutoff. Also cleaves host PABPC1, contributing to host translation shutoff. Cleaves host NLRP1, triggers host N-glycine-mediated degradation of the autoinhibitory NLRP1 N-terminal fragment. This Human rhinovirus A serotype 89 (strain 41467-Gallo) (HRV-89) protein is Genome polyprotein.